A 412-amino-acid polypeptide reads, in one-letter code: UV DNA damage endonuclease (412 aa).

Belongs to the uve1/UvsE family.

Its function is as follows. Component in a DNA repair pathway. Removal of UV LIGHT damaged nucleotides. Recognizes pyrimidine dimers and cleave a phosphodiester bond immediately 5' to the lesion. The polypeptide is UV DNA damage endonuclease (Clostridium perfringens (strain 13 / Type A)).